A 639-amino-acid chain; its full sequence is MHGLLLAAGLISLPLHVLAHPQPSSTSLAGRAVDLNEYRIGHRSSYTSNDEMMKQPSIASFRAGTYVEVATEMVKQTMPNMEFRLVDDHYIGQSGIGHVRFRQTMHGIDIDNSDFNVNAYDNFYQIGQDGKVLSHGNSFYTGPAPESSPVQKRDFSDPMQALHGVRKALNLPIKAEGATVENMSEHKVMFKGTSGALSDPTAKLCYMAKEDGSLALTWRVETDIGDNWLLSYMDAKDTGKVHNVVDYVAHATFQVYKWGLADPTEGNREILTNPWNLQTSPLTWLADGQNNFTATRGNNAIAQYNPDGGNDYENNYRPSPKNLKFEYPYSANMDPPKTYIDASVTQLFYTSNVCHDLYYMLGFNEKAGNFQVNNRGQGGKGNDYVILNAQDGSGTNNANFATPPDGQPGRMRAYIWTRANPPRDASFEAGTIIHEYTHGLSNRLCGGPANSRCLNAIESGGMGEGWGDFYATAVRLKPKDTRKTNYVKGGWVNNSPKGVRMYPYSTDMSVNPLVYTSNNQLNEVHAIGTVWATMLYELLWNLIDKHGKNDGPVPIFKNGIPSDGKYLAMKIVMDGMAIQPCNPNFVQARDAILDADKNLTKASNKCEIWKAFAKRGLGVGAKFDPKNRIGSNEVPKECK.

The first 19 residues, 1-19, serve as a signal peptide directing secretion; that stretch reads MHGLLLAAGLISLPLHVLA. Residues 20–250 constitute a propeptide that is removed on maturation; that stretch reads HPQPSSTSLA…VHNVVDYVAH (231 aa). Asn-291 is a glycosylation site (N-linked (GlcNAc...) asparagine). His-434 is a binding site for Zn(2+). Residue Glu-435 is part of the active site. His-438 contacts Zn(2+). The N-linked (GlcNAc...) asparagine glycan is linked to Asn-598.

The protein belongs to the peptidase M36 family. Zn(2+) is required as a cofactor.

It localises to the secreted. Secreted metalloproteinase probably acting as a virulence factor. The protein is Extracellular metalloproteinase 1 (MEP1) of Arthroderma otae (strain ATCC MYA-4605 / CBS 113480) (Microsporum canis).